The chain runs to 273 residues: Formamidopyrimidine-DNA glycosylase (273 aa).

The active-site Schiff-base intermediate with DNA is Pro2. Glu3 serves as the catalytic Proton donor. Residue Lys57 is the Proton donor; for beta-elimination activity of the active site. DNA-binding residues include His90, Arg109, and Lys150. The segment at 235–269 adopts an FPG-type zinc-finger fold; it reads KVYGRAGKECPVCSSKIEEEKIGQRNSFWCGKCQF. Residue Arg259 is the Proton donor; for delta-elimination activity of the active site.

Belongs to the FPG family. As to quaternary structure, monomer. The cofactor is Zn(2+).

The enzyme catalyses Hydrolysis of DNA containing ring-opened 7-methylguanine residues, releasing 2,6-diamino-4-hydroxy-5-(N-methyl)formamidopyrimidine.. The catalysed reaction is 2'-deoxyribonucleotide-(2'-deoxyribose 5'-phosphate)-2'-deoxyribonucleotide-DNA = a 3'-end 2'-deoxyribonucleotide-(2,3-dehydro-2,3-deoxyribose 5'-phosphate)-DNA + a 5'-end 5'-phospho-2'-deoxyribonucleoside-DNA + H(+). Its function is as follows. Involved in base excision repair of DNA damaged by oxidation or by mutagenic agents. Acts as a DNA glycosylase that recognizes and removes damaged bases. Has a preference for oxidized purines, such as 7,8-dihydro-8-oxoguanine (8-oxoG). Has AP (apurinic/apyrimidinic) lyase activity and introduces nicks in the DNA strand. Cleaves the DNA backbone by beta-delta elimination to generate a single-strand break at the site of the removed base with both 3'- and 5'-phosphates. In Aliivibrio fischeri (strain MJ11) (Vibrio fischeri), this protein is Formamidopyrimidine-DNA glycosylase.